A 470-amino-acid polypeptide reads, in one-letter code: Membrane-bound lytic murein transglycosylase F (470 aa).

Positions 1–21 (MLKEKLIIIITLVMLLCACDI) are cleaved as a signal peptide. Residues 22 to 259 (QEQSTQLAQI…VLEEKYFGHV (238 aa)) form a non-LT domain region. The tract at residues 260 to 470 (RQFNYVNTLA…PKIGDEVEAK (211 aa)) is LT domain. Residue Glu304 is part of the active site.

The protein in the N-terminal section; belongs to the bacterial solute-binding protein 3 family. This sequence in the C-terminal section; belongs to the transglycosylase Slt family.

Its subcellular location is the cell outer membrane. The catalysed reaction is Exolytic cleavage of the (1-&gt;4)-beta-glycosidic linkage between N-acetylmuramic acid (MurNAc) and N-acetylglucosamine (GlcNAc) residues in peptidoglycan, from either the reducing or the non-reducing ends of the peptidoglycan chains, with concomitant formation of a 1,6-anhydrobond in the MurNAc residue.. Functionally, murein-degrading enzyme that degrades murein glycan strands and insoluble, high-molecular weight murein sacculi, with the concomitant formation of a 1,6-anhydromuramoyl product. Lytic transglycosylases (LTs) play an integral role in the metabolism of the peptidoglycan (PG) sacculus. Their lytic action creates space within the PG sacculus to allow for its expansion as well as for the insertion of various structures such as secretion systems and flagella. This Pseudoalteromonas translucida (strain TAC 125) protein is Membrane-bound lytic murein transglycosylase F.